The chain runs to 884 residues: MGSTGEPDRKRRLSSSVAPGGGAPVSPAKRLAVAPTSEDKKLDFTVLKYKNQKLSEQLEAHKFEYRALENKFAGLKEKQRTHNETLSLVNSSWEQLVADLKSRSFCKSGSPNSSPGSGHNNVQKDGTCAPIERDTLRSLVESGATESSGCLPGCHLGSDAPPLHLSTANALGDIFFPSSDLLQANEECALAALTKLPENDRSKQLQSTSSNLLSSLNNVVQALSNLQLKHKQLAEDYQNQRDSSARKRAEHRRLKEELASAASELEETNYKLAALKAQRDNTQGARIPYPTLGNKSMPEDKVRDKQREMQDLEATHKELSELISKRLVEIKRLHEERIEILNKIATFQNILMDFKSIRSSKAFQLVNDRLQKSQAELDHYQTLLEKLQVDKDKFVWQERQFNLKVDLAEIPERVSTYCESSIADLKKDIQKLRDEKNMLILKLEEASREPGRNQVITKFKALVSSIPREMGAMQSEMTKHKEASLELNSLRAEVHSLSRILSRKERDNEEASCRSARAGSDITQLQSVISDLKQTNKELKLFADMYKRESTDSREIMESRDREFLEWAHVHALKSSLDESKLEQRVKAANEAEAITQQRLATAEAEIAESGQKLGTSRKDLVSLSHMLKSKQEECEAYRVEVECIGQAYEDIQAQNQQLLQQIIERDDDNTKIFMEGVKAKQTQDALHLETYSLRRNLQQESSLMDLYNQKIVSLEDQLKMWSDRVGKLQEDGWQQSVSLSNYQRKLVDVHRDAQKLMQSLDGIQANVGSSRLEVADLLIELEKERFSKKRIEDDLEVMSRKASSLRAKARESAVLEKLRHEVKEYRGILKCGICHDRQKEVVITKCYHLFCNQCIQKSLGNRQRRCPSCSLSFGANDVKPIYI.

The disordered stretch occupies residues 1–37; sequence MGSTGEPDRKRRLSSSVAPGGGAPVSPAKRLAVAPTS. Residues 49–86 are a coiled coil; that stretch reads YKNQKLSEQLEAHKFEYRALENKFAGLKEKQRTHNETL. Residues 107-127 are disordered; the sequence is KSGSPNSSPGSGHNNVQKDGT. Over residues 108–121 the composition is skewed to low complexity; the sequence is SGSPNSSPGSGHNN. 4 coiled-coil regions span residues 216-541, 580-663, 696-762, and 789-827; these read LNNV…ELKL, SKLE…LQQI, RNLQ…QSLD, and KKRIEDDLEVMSRKASSLRAKARESAVLEKLRHEVKEYR. The RING-type zinc finger occupies 832-871; sequence CGICHDRQKEVVITKCYHLFCNQCIQKSLGNRQRRCPSCS.

Belongs to the BRE1 family.

It localises to the nucleus. It carries out the reaction S-ubiquitinyl-[E2 ubiquitin-conjugating enzyme]-L-cysteine + [acceptor protein]-L-lysine = [E2 ubiquitin-conjugating enzyme]-L-cysteine + N(6)-ubiquitinyl-[acceptor protein]-L-lysine.. It functions in the pathway protein modification; protein ubiquitination. In terms of biological role, E3 ubiquitin-protein ligase that monoubiquitinates H2B to form H2BK143ub1. H2BK143ub1 gives a specific tag for epigenetic transcriptional activation and is also prerequisite for H3K4me and maybe H3K79me. It thereby plays a central role in histone code and gene regulation. Forms a ubiquitin ligase complex in cooperation with the E2 enzyme UBC2/RAD6. This chain is E3 ubiquitin-protein ligase BRE1-like 1 (BRE1A), found in Oryza sativa subsp. indica (Rice).